Reading from the N-terminus, the 437-residue chain is Trigger factor (437 aa).

The region spanning 163 to 248 is the PPIase FKBP-type domain; sequence GDRVIIDFEG…LNNVSEATLP (86 aa).

It belongs to the FKBP-type PPIase family. Tig subfamily.

It is found in the cytoplasm. The catalysed reaction is [protein]-peptidylproline (omega=180) = [protein]-peptidylproline (omega=0). Its function is as follows. Involved in protein export. Acts as a chaperone by maintaining the newly synthesized protein in an open conformation. Functions as a peptidyl-prolyl cis-trans isomerase. This is Trigger factor (tig) from Neisseria meningitidis serogroup B (strain ATCC BAA-335 / MC58).